The chain runs to 386 residues: Ethanolamine kinase 2 (386 aa).

The protein belongs to the choline/ethanolamine kinase family. Expressed in kidney, liver, ovary, testis and prostate.

It catalyses the reaction ethanolamine + ATP = phosphoethanolamine + ADP + H(+). Its pathway is phospholipid metabolism; phosphatidylethanolamine biosynthesis; phosphatidylethanolamine from ethanolamine: step 1/3. Its function is as follows. Highly specific for ethanolamine phosphorylation. Does not have choline kinase activity. This Homo sapiens (Human) protein is Ethanolamine kinase 2 (ETNK2).